A 548-amino-acid chain; its full sequence is Probable aquaglyceroporin-4 (548 aa).

Over residues 1 to 22 (MAGTQDQSQDYFSKPTTPSTPG) the composition is skewed to polar residues. 3 disordered regions span residues 1 to 63 (MAGT…LPST), 76 to 101 (SRGF…SHFH), and 158 to 270 (KEET…ESGD). The Cytoplasmic portion of the chain corresponds to 1–290 (MAGTQDQSQD…ARLRARHPEP (290 aa)). The span at 38–48 (PDRESGTERAK) shows a compositional bias: basic and acidic residues. Polar residues-rich tracts occupy residues 77 to 97 (RGFS…PQHS) and 171 to 200 (SRTT…SRTT). The span at 249–265 (PDFKVDGEPLGHQEKPC) shows a compositional bias: basic and acidic residues. A helical transmembrane segment spans residues 291-311 (LAEFLATAVAIFLGLTGTLSV). A glycan (N-linked (GlcNAc...) asparagine) is linked at Asn-312. The Extracellular segment spans residues 312 to 327 (NLSATQSQPYGTYETS). Residues 328 to 348 (CWAWGFAWMFGIYLGGGVSGA) traverse the membrane as a helical segment. At 349 to 369 (HMNPAISVSLSIFRGFPWRQC) the chain is on the cytoplasmic side. Positions 351–353 (NPA) match the NPA 1 motif. The helical transmembrane segment at 370–390 (VIYVFVQFIASIVAGALAYAM) threads the bilayer. Topologically, residues 391–420 (YADSINHVDPDMTKMSMTFFSTPREWVTLK) are extracellular. A helical membrane pass occupies residues 421–441 (SAFFNQVVGSAIMMIAVFALG). At 442-448 (DDQNNPP) the chain is on the cytoplasmic side. The chain crosses the membrane as a helical span at residues 449-469 (GAGMHALVLGFLVTTLKFTLG). The Extracellular segment spans residues 470–508 (YNIGSALNPASDFGPRVIAYAVGFRGDNVFHSGWWFYGP). Positions 477-479 (NPA) match the NPA 2 motif. A helical transmembrane segment spans residues 509–529 (WAATLIGSLLGCTLYDGFVFV). Topologically, residues 530-548 (GSESPVNFRVDKRVKKLFN) are cytoplasmic.

This sequence belongs to the MIP/aquaporin (TC 1.A.8) family.

It localises to the membrane. It carries out the reaction H2O(in) = H2O(out). It catalyses the reaction glycerol(in) = glycerol(out). Probable water/glycerol channel that may have redundant functions with FgAQP2. The protein is Probable aquaglyceroporin-4 of Gibberella zeae (strain ATCC MYA-4620 / CBS 123657 / FGSC 9075 / NRRL 31084 / PH-1) (Wheat head blight fungus).